The sequence spans 680 residues: tRNA 5-methylaminomethyl-2-thiouridine biosynthesis bifunctional protein MnmC (680 aa).

Residues 1 to 267 (MTAEPNKPCQ…MAAILSSDAP (267 aa)) are tRNA (mnm(5)s(2)U34)-methyltransferase. Residues 273–680 (IGGGLASAHL…LRKLLKGKSL (408 aa)) are FAD-dependent cmnm(5)s(2)U34 oxidoreductase.

This sequence in the N-terminal section; belongs to the methyltransferase superfamily. tRNA (mnm(5)s(2)U34)-methyltransferase family. In the C-terminal section; belongs to the DAO family. It depends on FAD as a cofactor.

It localises to the cytoplasm. The catalysed reaction is 5-aminomethyl-2-thiouridine(34) in tRNA + S-adenosyl-L-methionine = 5-methylaminomethyl-2-thiouridine(34) in tRNA + S-adenosyl-L-homocysteine + H(+). In terms of biological role, catalyzes the last two steps in the biosynthesis of 5-methylaminomethyl-2-thiouridine (mnm(5)s(2)U) at the wobble position (U34) in tRNA. Catalyzes the FAD-dependent demodification of cmnm(5)s(2)U34 to nm(5)s(2)U34, followed by the transfer of a methyl group from S-adenosyl-L-methionine to nm(5)s(2)U34, to form mnm(5)s(2)U34. The protein is tRNA 5-methylaminomethyl-2-thiouridine biosynthesis bifunctional protein MnmC of Shewanella sp. (strain W3-18-1).